Consider the following 211-residue polypeptide: Dephospho-CoA kinase (211 aa).

The DPCK domain maps to Val3–Ala206. ATP is bound at residue Gly11–Ile16.

This sequence belongs to the CoaE family.

Its subcellular location is the cytoplasm. It carries out the reaction 3'-dephospho-CoA + ATP = ADP + CoA + H(+). It participates in cofactor biosynthesis; coenzyme A biosynthesis; CoA from (R)-pantothenate: step 5/5. Catalyzes the phosphorylation of the 3'-hydroxyl group of dephosphocoenzyme A to form coenzyme A. The protein is Dephospho-CoA kinase of Syntrophotalea carbinolica (strain DSM 2380 / NBRC 103641 / GraBd1) (Pelobacter carbinolicus).